Consider the following 267-residue polypeptide: Transcription factor Spi-B (267 aa).

Positions 1–31 (MLALEAAQLDGPHLSCLYPEGVFYDLDSCKP) are TAD1 (Acidic). A TAD2 region spans residues 41–62 (LDSTWGWTEAPPAPAIAPYEAF). A DNA-binding region (ETS) is located at residues 174 to 257 (LRLYQFLLGL…VKRKLTYQFD (84 aa)).

Belongs to the ETS family. Can form homotypic interactions. Interacts with IRF4/Pip. Interacts with JUN. Interacts with TBP. May also interact with CREBBP and EP300. Interacts with NONO/p54(nrb). Expressed in the medulla of the thymus, the spleen and germinal centers of the lymph nodes. Expressed in B-cells and T-cells, expression increases during B-cell maturation and decreases during T-cell maturation.

It localises to the nucleus. Its function is as follows. Sequence specific transcriptional activator which binds to the PU-box, a purine-rich DNA sequence (5'-GAGGAA-3') that can act as a lymphoid-specific enhancer. Promotes development of plasmacytoid dendritic cells (pDCs), also known as type 2 DC precursors (pre-DC2) or natural interferon (IFN)-producing cells. These cells have the capacity to produce large amounts of interferon and block viral replication. Required for B-cell receptor (BCR) signaling, which is necessary for normal B-cell development and antigenic stimulation. This chain is Transcription factor Spi-B (Spib), found in Mus musculus (Mouse).